The sequence spans 83 residues: uncharacterized protein (83 aa).

Belongs to the BolA/IbaG family.

This is an uncharacterized protein from Acinetobacter guillouiae (Acinetobacter genomosp. 11).